A 225-amino-acid polypeptide reads, in one-letter code: Uridylate kinase (225 aa).

Asp6 provides a ligand contact to Mg(2+). Gly9 to Ser10 provides a ligand contact to ATP. Gly44 contributes to the UMP binding site. Gly45 and Arg49 together coordinate ATP. UMP contacts are provided by residues Asp66 and Thr114–Thr120. Residues Thr120 and Asp121 each contribute to the Mg(2+) site. Thr140, Asn141, Tyr146, and Asp149 together coordinate ATP. Position 179 (Gly179) interacts with UMP. Residue Ser182 coordinates Mg(2+). An ATP-binding site is contributed by Ser182.

Belongs to the UMP kinase family. As to quaternary structure, homohexamer; trimer of dimers.

The protein localises to the cytoplasm. The catalysed reaction is UMP + ATP = UDP + ADP. Its pathway is pyrimidine metabolism; CTP biosynthesis via de novo pathway; UDP from UMP (UMPK route): step 1/1. Inhibited by UTP. Its function is as follows. Catalyzes the reversible phosphorylation of UMP to UDP, with ATP as the most efficient phosphate donor. The polypeptide is Uridylate kinase (pyrH) (Pyrococcus furiosus (strain ATCC 43587 / DSM 3638 / JCM 8422 / Vc1)).